A 401-amino-acid polypeptide reads, in one-letter code: Subtilisin-like protease 10 (401 aa).

The first 19 residues, 1-19 (MLFLKAVIAILSVLPAADA), serve as a signal peptide directing secretion. A propeptide spanning residues 20-116 (AAILNFENKQ…IEPDRMASAQ (97 aa)) is cleaved from the precursor. An Inhibitor I9 domain is found at 35–112 (SYIVVLKNDI…QVDYIEPDRM (78 aa)). One can recognise a Peptidase S8 domain in the interval 126–401 (SWGLGRISHQ…NRLLYNGSGQ (276 aa)). Active-site charge relay system residues include D158 and H189. An N-linked (GlcNAc...) asparagine glycan is attached at N250. The active-site Charge relay system is the S347. Residue N397 is glycosylated (N-linked (GlcNAc...) asparagine).

Belongs to the peptidase S8 family.

Its subcellular location is the secreted. Functionally, secreted subtilisin-like serine protease with keratinolytic activity that contributes to pathogenicity. This chain is Subtilisin-like protease 10 (SUB10), found in Arthroderma otae (strain ATCC MYA-4605 / CBS 113480) (Microsporum canis).